Reading from the N-terminus, the 161-residue chain is Regulator of ribonuclease activity A (161 aa).

The protein belongs to the RraA family. Homotrimer. Binds to both RNA-binding sites in the C-terminal region of Rne and to RhlB.

It is found in the cytoplasm. In terms of biological role, globally modulates RNA abundance by binding to RNase E (Rne) and regulating its endonucleolytic activity. Can modulate Rne action in a substrate-dependent manner by altering the composition of the degradosome. Modulates RNA-binding and helicase activities of the degradosome. This chain is Regulator of ribonuclease activity A, found in Shewanella oneidensis (strain ATCC 700550 / JCM 31522 / CIP 106686 / LMG 19005 / NCIMB 14063 / MR-1).